We begin with the raw amino-acid sequence, 257 residues long: Thioesterase frbE (257 aa).

This sequence belongs to the AMT4 thioesterase family.

It functions in the pathway antifungal biosynthesis. Thioesterase; part of the gene cluster that mediates the biosynthesis of the antifungal antibiotic FR901469, an inhibitor of beta-1,3-glucansynthase, exerting antifungal activity against the pathogenes Candida albicans and Aspergillus fumigatus. FR901469 is a cyclic depsipeptide containing 12 amino acid residues and a fatty acid chain. The NRPS frbI contains 12 modules responsible for the formation of the depsipeptide backbone which is denoted as Acyl-Thr-Ala-Tyr-Val-4OHPro-Thr-Thr-3OHPro-threo3OHGln-Gly-Thr-Orn-OH (C71H116N14O23). The PKS frbB is probably involved in the production of the hydrocarbon chain, and the acyl-CoA ligase frbC might be involved in the transport of the chain to the peptide ptoduct of frbI. Because FR901469 contains 3 hydroxylated amino acid residues, the 3 oxygenases frbA, frbH, and frbJ might be participating in amino acid hydroxylation. As no thioesterase domains were detected in frbI or frbB, the thioesterases frbD and frbE may instead release and cyclize the products of the NRPS and PKS, respectively. The polypeptide is Thioesterase frbE (Dothideomycetidae sp. (strain 11243) (Fungal sp. (strain No.11243))).